A 228-amino-acid polypeptide reads, in one-letter code: Cytochrome c oxidase subunit 2 (228 aa).

Topologically, residues 1-26 are mitochondrial intermembrane; the sequence is MATWANLGLQNSSSPLMEQLNFFHDH. A helical membrane pass occupies residues 27 to 48; that stretch reads TVLILIMITVMITYVMGMLFFN. At 49-62 the chain is on the mitochondrial matrix side; the sequence is KFTNRYLLHGQTIE. A helical membrane pass occupies residues 63–82; sequence IIWTILPAIILMFIAFPSLR. The Mitochondrial intermembrane segment spans residues 83–228; the sequence is LLYLLDEINS…FIKWVSSQLN (146 aa). The Cu cation site is built by H161, C196, E198, C200, H204, and M207. Position 198 (E198) interacts with Mg(2+).

Belongs to the cytochrome c oxidase subunit 2 family. Component of the cytochrome c oxidase (complex IV, CIV), a multisubunit enzyme composed of a catalytic core of 3 subunits and several supernumerary subunits. The complex exists as a monomer or a dimer and forms supercomplexes (SCs) in the inner mitochondrial membrane with ubiquinol-cytochrome c oxidoreductase (cytochrome b-c1 complex, complex III, CIII). It depends on Cu cation as a cofactor.

It is found in the mitochondrion inner membrane. It catalyses the reaction 4 Fe(II)-[cytochrome c] + O2 + 8 H(+)(in) = 4 Fe(III)-[cytochrome c] + 2 H2O + 4 H(+)(out). Its function is as follows. Component of the cytochrome c oxidase, the last enzyme in the mitochondrial electron transport chain which drives oxidative phosphorylation. The respiratory chain contains 3 multisubunit complexes succinate dehydrogenase (complex II, CII), ubiquinol-cytochrome c oxidoreductase (cytochrome b-c1 complex, complex III, CIII) and cytochrome c oxidase (complex IV, CIV), that cooperate to transfer electrons derived from NADH and succinate to molecular oxygen, creating an electrochemical gradient over the inner membrane that drives transmembrane transport and the ATP synthase. Cytochrome c oxidase is the component of the respiratory chain that catalyzes the reduction of oxygen to water. Electrons originating from reduced cytochrome c in the intermembrane space (IMS) are transferred via the dinuclear copper A center (CU(A)) of subunit 2 and heme A of subunit 1 to the active site in subunit 1, a binuclear center (BNC) formed by heme A3 and copper B (CU(B)). The BNC reduces molecular oxygen to 2 water molecules using 4 electrons from cytochrome c in the IMS and 4 protons from the mitochondrial matrix. The polypeptide is Cytochrome c oxidase subunit 2 (COII) (Culex quinquefasciatus (Southern house mosquito)).